The sequence spans 144 residues: UPF0547 protein C16orf87 homolog (144 aa).

Positions 33 to 112 (HAKQSQRLPP…EEKEKQEKEV (80 aa)) are disordered. Positions 35 to 45 (KQSQRLPPTSE) are enriched in polar residues. Over residues 50 to 62 (PKRRRTERIKRER) the composition is skewed to basic residues. Basic and acidic residues-rich tracts occupy residues 63–74 (IHTAVNRDLENR) and 99–112 (KKHEEEKEKQEKEV). Positions 94 to 122 (KTATTKKHEEEKEKQEKEVDMYANLSDEK) form a coiled coil.

It belongs to the UPF0547 family.

This chain is UPF0547 protein C16orf87 homolog, found in Xenopus laevis (African clawed frog).